The sequence spans 629 residues: Myotonin-protein kinase (629 aa).

At 1-590 (MSAEVRLRRL…PRPGLSEALS (590 aa)) the chain is on the cytoplasmic side. The Protein kinase domain occupies 71 to 339 (FEILKVIGRG…AGDFRTHPFF (269 aa)). Residues 77-85 (IGRGAFSEV) and Lys-100 contribute to the ATP site. The Proton acceptor role is filled by Asp-195. Phosphoserine; by autocatalysis occurs at positions 216 and 228. At Thr-234 the chain carries Phosphothreonine; by autocatalysis. The 76-residue stretch at 340-415 (FGLDWDGLRD…SCMALRDSEV (76 aa)) folds into the AGC-kinase C-terminal domain. Residues 457 to 536 (VPAAEAEAEV…LQAEGATAVT (80 aa)) adopt a coiled-coil conformation. The helical; Anchor for type IV membrane protein transmembrane segment at 591–611 (LLLFAVVLSRAAALGCIGLVA) threads the bilayer. The Lumenal segment spans residues 612 to 629 (HAGQLTAVWRRPGAARAP).

This sequence belongs to the protein kinase superfamily. AGC Ser/Thr protein kinase family. DMPK subfamily. As to quaternary structure, homodimer; homodimerization stimulates the kinase activity. Interacts with HSPB2; may enhance DMPK kinase activity. Interacts with PLN; phosphorylates PLN. May interact with RAC1; may regulate DMPK kinase activity. Interacts with LMNA; may regulate nuclear envelope stability. It depends on Mg(2+) as a cofactor. In terms of processing, phosphorylated. Autophosphorylates. Phosphorylation by RAF1 may result in activation of DMPK. Proteolytic processing of the C-terminus may remove the transmembrane domain and release the kinase from membranes stimulating its activity. As to expression, most isoforms are expressed in many tissues including heart, skeletal muscle, liver and brain, except for isoform 2 which is only found in the heart and skeletal muscle, and isoform 14 which is only found in the brain, with high levels in the striatum, cerebellar cortex and pons.

The protein localises to the endoplasmic reticulum membrane. It localises to the nucleus outer membrane. The protein resides in the mitochondrion outer membrane. Its subcellular location is the sarcoplasmic reticulum membrane. It is found in the cell membrane. The protein localises to the cytoplasm. It localises to the cytosol. The protein resides in the mitochondrion membrane. It carries out the reaction L-seryl-[protein] + ATP = O-phospho-L-seryl-[protein] + ADP + H(+). The enzyme catalyses L-threonyl-[protein] + ATP = O-phospho-L-threonyl-[protein] + ADP + H(+). With respect to regulation, coiled-coil-mediated oligomerization enhances the catalytic activity. Proteolytic processing of the C-terminus may release the protein from membranes and constitute a mean to regulate the enzyme. May be regulated by HSPB2, RAC1, RAF1 and G-protein second messengers. In terms of biological role, non-receptor serine/threonine protein kinase which is necessary for the maintenance of skeletal muscle structure and function. May play a role in myocyte differentiation and survival by regulating the integrity of the nuclear envelope and the expression of muscle-specific genes. May also phosphorylate PPP1R12A and inhibit the myosin phosphatase activity to regulate myosin phosphorylation. Also critical to the modulation of cardiac contractility and to the maintenance of proper cardiac conduction activity probably through the regulation of cellular calcium homeostasis. Phosphorylates PLN, a regulator of calcium pumps and may regulate sarcoplasmic reticulum calcium uptake in myocytes. May also phosphorylate FXYD1/PLM which is able to induce chloride currents. May also play a role in synaptic plasticity. In Homo sapiens (Human), this protein is Myotonin-protein kinase (DMPK).